A 2157-amino-acid polypeptide reads, in one-letter code: DExH-box ATP-dependent RNA helicase DExH14 (2157 aa).

Positions 374–394 are disordered; that stretch reads KAASNTQSRMPTYGTQVTVQT. Residues 375–394 are compositionally biased toward polar residues; that stretch reads AASNTQSRMPTYGTQVTVQT. In terms of domain architecture, Helicase ATP-binding 1 spans 517–699; that stretch reads QTVYHTNENI…FLRVNTDTGL (183 aa). 530-537 lines the ATP pocket; sequence APTGAGKT. The short motif at 641-644 is the DEVH box element; that stretch reads DEVH. The region spanning 734–932 is the Helicase C-terminal 1 domain; the sequence is CYKKVVDSIK…SLKDNLNAEV (199 aa). One can recognise an SEC63 1 domain in the interval 1008–1315; sequence CTELGRVASH…LHAETYFTIS (308 aa). The 176-residue stretch at 1365–1540 folds into the Helicase ATP-binding 2 domain; the sequence is HVLYHTDNNV…WLGVGEIGLF (176 aa). 1378 to 1385 is an ATP binding site; it reads APTGSGKT. The short motif at 1482–1485 is the DEIH box element; that stretch reads DEIH. Residues 1571–1780 enclose the Helicase C-terminal 2 domain; that stretch reads NKPAYAAICT…GTIGNKEDAV (210 aa). In terms of domain architecture, SEC63 2 spans 1839–2150; the sequence is PTMLGTIASQ…YLGFEQEHSI (312 aa).

The protein belongs to the DExH box helicase family.

Its subcellular location is the nucleus. The enzyme catalyses ATP + H2O = ADP + phosphate + H(+). Its function is as follows. RNA helicase that plays an essential role in pre-mRNA splicing as component of the U5 snRNP and U4/U6-U5 tri-snRNP complexes. Involved in spliceosome assembly, activation and disassembly. In Arabidopsis thaliana (Mouse-ear cress), this protein is DExH-box ATP-dependent RNA helicase DExH14.